We begin with the raw amino-acid sequence, 712 residues long: Methionine--tRNA ligase (712 aa).

The short motif at 20 to 30 (PYANGKAHIGH) is the 'HIGH' region element. 4 residues coordinate Zn(2+): C151, C154, C163, and C167. The 'KMSKS' region motif lies at 334–338 (KFSKT). K337 is a binding site for ATP. The interval 559 to 585 (ANAKKSAAKGGEKEPSKSEGMGPSEEA) is disordered. The tRNA-binding domain maps to 610-712 (DFAKLDIRVG…KEIKPGSRIR (103 aa)).

This sequence belongs to the class-I aminoacyl-tRNA synthetase family. MetG type 1 subfamily. In terms of assembly, homodimer. Zn(2+) is required as a cofactor.

Its subcellular location is the cytoplasm. The enzyme catalyses tRNA(Met) + L-methionine + ATP = L-methionyl-tRNA(Met) + AMP + diphosphate. Functionally, is required not only for elongation of protein synthesis but also for the initiation of all mRNA translation through initiator tRNA(fMet) aminoacylation. In Methanosarcina acetivorans (strain ATCC 35395 / DSM 2834 / JCM 12185 / C2A), this protein is Methionine--tRNA ligase.